Reading from the N-terminus, the 95-residue chain is Osteocalcin 1 (95 aa).

Positions 1–21 are cleaved as a signal peptide; the sequence is MKTLSVLVLCSLAVLCLTSDA. Residues 22-50 constitute a propeptide that is removed on maturation; the sequence is SFSSQPAVDTPAQEGLFVEQEQASSVVRQ. Positions 45–91 constitute a Gla domain; it reads SSVVRQAPKELSLSQLESLREVCELNLACEDMMDTSGIIAAYTTYYG. Ca(2+) is bound by residues E61, E65, and E68. 4-carboxyglutamate is present on residues E61, E65, and E68. Cysteines 67 and 73 form a disulfide.

This sequence belongs to the osteocalcin/matrix Gla protein family. Post-translationally, gamma-carboxyglutamate residues are formed by vitamin K dependent carboxylation by GGCX. These residues are essential for the binding of calcium.

It is found in the secreted. Its function is as follows. The carboxylated form is one of the main organic components of the bone matrix, which constitutes 1-2% of the total bone protein. The carboxylated form binds strongly to apatite and calcium. The protein is Osteocalcin 1 of Solea senegalensis (Senegalese sole).